Consider the following 149-residue polypeptide: 4-hydroxyphenylacetate 3-monooxygenase, reductase component (149 aa).

27–34 (ERGMTATA) is a binding site for FAD. Ser-37 lines the NAD(+) pocket. FAD contacts are provided by residues 48–50 (AVS), 54–55 (KL), and His-80. NAD(+)-binding positions include His-116 and 137-140 (YFQR).

It belongs to the non-flavoprotein flavin reductase family. HpaC subfamily. In terms of assembly, homodimer. 4-HPA 3-monooxygenase consists of a reductase component HpaC and an oxygenase component HpaB.

The catalysed reaction is a reduced flavin + NAD(+) = an oxidized flavin + NADH + 2 H(+). It participates in aromatic compound metabolism; 4-hydroxyphenylacetate degradation; pyruvate and succinate semialdehyde from 4-hydroxyphenylacetate: step 1/7. In terms of biological role, catalyzes the reduction of free flavins (FMN, FAD and riboflavin) by NADH. Subsequently, the reduced flavins diffuse to the large HpaB component. It utilizes NADH, but not NADPH as an electron donor, and both FAD and FMN as electron acceptors. This is 4-hydroxyphenylacetate 3-monooxygenase, reductase component from Thermus thermophilus (strain ATCC 27634 / DSM 579 / HB8).